The following is a 200-amino-acid chain: MSYLRPAVVLLILLTLITGIAYPLLTTGLAKLMFSQQANGSLVMLGDEVVGSSLIGQNFTQLGYFSGRPSATAEMPYNSMASGGSNLAISNPELDKAITERVKSLRQANPTQTGPVPVDLVTASASGLDPQISLAAAYYQAPRIASIRQMPLSEVKQLIDSNVQKATPNFFGESVVNVLNLNMALDAQSHVKVPATSTKS.

The helical transmembrane segment at 6-26 (PAVVLLILLTLITGIAYPLLT) threads the bilayer.

It belongs to the KdpC family. In terms of assembly, the system is composed of three essential subunits: KdpA, KdpB and KdpC.

It localises to the cell inner membrane. Functionally, part of the high-affinity ATP-driven potassium transport (or Kdp) system, which catalyzes the hydrolysis of ATP coupled with the electrogenic transport of potassium into the cytoplasm. This subunit acts as a catalytic chaperone that increases the ATP-binding affinity of the ATP-hydrolyzing subunit KdpB by the formation of a transient KdpB/KdpC/ATP ternary complex. This chain is Potassium-transporting ATPase KdpC subunit, found in Yersinia enterocolitica serotype O:8 / biotype 1B (strain NCTC 13174 / 8081).